Consider the following 545-residue polypeptide: Chaperonin GroEL (545 aa).

ATP is bound by residues 29 to 32 (TLGP), Lys50, 86 to 90 (DGTTT), Gly413, 479 to 481 (NAA), and Asp496. A disordered region spans residues 525–545 (KPEKEKAPAAAGAPDMGGMDF). The span at 532–545 (PAAAGAPDMGGMDF) shows a compositional bias: low complexity.

It belongs to the chaperonin (HSP60) family. In terms of assembly, forms a cylinder of 14 subunits composed of two heptameric rings stacked back-to-back. Interacts with the co-chaperonin GroES.

The protein localises to the cytoplasm. The enzyme catalyses ATP + H2O + a folded polypeptide = ADP + phosphate + an unfolded polypeptide.. Functionally, together with its co-chaperonin GroES, plays an essential role in assisting protein folding. The GroEL-GroES system forms a nano-cage that allows encapsulation of the non-native substrate proteins and provides a physical environment optimized to promote and accelerate protein folding. The polypeptide is Chaperonin GroEL (Deinococcus geothermalis (strain DSM 11300 / CIP 105573 / AG-3a)).